Reading from the N-terminus, the 70-residue chain is ATP synthase subunit c (70 aa).

Transmembrane regions (helical) follow at residues 4 to 24 (IAAA…NGLI) and 47 to 67 (FIGI…SFIV).

It belongs to the ATPase C chain family. F-type ATPases have 2 components, F(1) - the catalytic core - and F(0) - the membrane proton channel. F(1) has five subunits: alpha(3), beta(3), gamma(1), delta(1), epsilon(1). F(0) has three main subunits: a(1), b(2) and c(10-14). The alpha and beta chains form an alternating ring which encloses part of the gamma chain. F(1) is attached to F(0) by a central stalk formed by the gamma and epsilon chains, while a peripheral stalk is formed by the delta and b chains.

It localises to the cell membrane. Its function is as follows. F(1)F(0) ATP synthase produces ATP from ADP in the presence of a proton or sodium gradient. F-type ATPases consist of two structural domains, F(1) containing the extramembraneous catalytic core and F(0) containing the membrane proton channel, linked together by a central stalk and a peripheral stalk. During catalysis, ATP synthesis in the catalytic domain of F(1) is coupled via a rotary mechanism of the central stalk subunits to proton translocation. Functionally, key component of the F(0) channel; it plays a direct role in translocation across the membrane. A homomeric c-ring of between 10-14 subunits forms the central stalk rotor element with the F(1) delta and epsilon subunits. The sequence is that of ATP synthase subunit c from Staphylococcus carnosus (strain TM300).